The sequence spans 167 residues: Phosphopantetheine adenylyltransferase (167 aa).

Position 11 (serine 11) interacts with substrate. Residues 11-12 and histidine 19 each bind ATP; that span reads SF. Lysine 43, threonine 76, and arginine 90 together coordinate substrate. Residues 91–93, glutamate 101, and 126–132 each bind ATP; these read GIR and YDALSST.

The protein belongs to the bacterial CoaD family. In terms of assembly, homohexamer. The cofactor is Mg(2+).

Its subcellular location is the cytoplasm. It catalyses the reaction (R)-4'-phosphopantetheine + ATP + H(+) = 3'-dephospho-CoA + diphosphate. It functions in the pathway cofactor biosynthesis; coenzyme A biosynthesis; CoA from (R)-pantothenate: step 4/5. In terms of biological role, reversibly transfers an adenylyl group from ATP to 4'-phosphopantetheine, yielding dephospho-CoA (dPCoA) and pyrophosphate. The protein is Phosphopantetheine adenylyltransferase of Lacticaseibacillus casei (strain BL23) (Lactobacillus casei).